The sequence spans 520 residues: GMP synthase [glutamine-hydrolyzing] (520 aa).

The Glutamine amidotransferase type-1 domain maps to 12 to 205 (KIIVLDYGSQ…AISICGARGD (194 aa)). The active-site Nucleophile is C89. Catalysis depends on residues H179 and E181. A GMPS ATP-PPase domain is found at 206-395 (WSMDNFIDME…LGMPDEVVWR (190 aa)). 233–239 (SGGVDSS) lines the ATP pocket.

As to quaternary structure, homodimer.

It catalyses the reaction XMP + L-glutamine + ATP + H2O = GMP + L-glutamate + AMP + diphosphate + 2 H(+). It participates in purine metabolism; GMP biosynthesis; GMP from XMP (L-Gln route): step 1/1. Its function is as follows. Catalyzes the synthesis of GMP from XMP. This Streptococcus equi subsp. zooepidemicus (strain H70) protein is GMP synthase [glutamine-hydrolyzing].